Consider the following 424-residue polypeptide: Gamma-glutamyl phosphate reductase (424 aa).

The protein belongs to the gamma-glutamyl phosphate reductase family.

Its subcellular location is the cytoplasm. The catalysed reaction is L-glutamate 5-semialdehyde + phosphate + NADP(+) = L-glutamyl 5-phosphate + NADPH + H(+). The protein operates within amino-acid biosynthesis; L-proline biosynthesis; L-glutamate 5-semialdehyde from L-glutamate: step 2/2. Functionally, catalyzes the NADPH-dependent reduction of L-glutamate 5-phosphate into L-glutamate 5-semialdehyde and phosphate. The product spontaneously undergoes cyclization to form 1-pyrroline-5-carboxylate. This chain is Gamma-glutamyl phosphate reductase, found in Dehalococcoides mccartyi (strain ATCC BAA-2266 / KCTC 15142 / 195) (Dehalococcoides ethenogenes (strain 195)).